A 337-amino-acid chain; its full sequence is Probable arabinose 5-phosphate isomerase (337 aa).

The SIS domain occupies 58–201 (VIDLILACEG…AVSLITARNF (144 aa)). Residues 92–93 (GT), histidine 99, histidine 105, 131–140 (KLIPSLKNFG), 165–167 (TVE), threonine 237, and aspartate 290 contribute to the substrate site. Histidine 99 lines the Zn(2+) pocket. The 58-residue stretch at 227–284 (MQTRLPTILPTTNFTDCLTVMNEGRMGVALVMENEQLKGIITDGDIRRALTANGAGTL) folds into the CBS 1 domain. Residues 292-337 (MTSSPKTIHQDEFLSKAEDFMKAKKIHSLVVVNDENHVVGLVEFSS) enclose the CBS 2 domain.

Belongs to the SIS family. GutQ/KpsF subfamily.

The catalysed reaction is D-arabinose 5-phosphate = D-ribulose 5-phosphate. In terms of biological role, catalyzes the reversible aldol-ketol isomerization between D-ribulose 5-phosphate (Ru5P) and D-arabinose 5-phosphate (A5P). The polypeptide is Probable arabinose 5-phosphate isomerase (Haemophilus influenzae (strain ATCC 51907 / DSM 11121 / KW20 / Rd)).